The primary structure comprises 1145 residues: DNA mismatch repair protein msh-3 (1145 aa).

Disordered regions lie at residues 1-183 (MAGP…GAKT) and 857-879 (SSSA…LAQL). Residues 13-33 (ASISSFFTPRNTSPLVNLSQN) are compositionally biased toward polar residues. Residues 121–131 (AERKKKEELHR) show a composition bias toward basic and acidic residues. A compositionally biased stretch (acidic residues) spans 158 to 169 (GEGEEGEDDEEE). The tract at residues 183-307 (TGKLTPMELQ…RKLTNVYTKG (125 aa)) is mispair-binding domain. 882–889 (GPNMGGKS) contributes to the ATP binding site. The interval 1030–1056 (KSRTSMDDDAMEVDGDGDGQEGAGADK) is disordered. A compositionally biased stretch (acidic residues) spans 1036-1048 (DDDAMEVDGDGDG).

This sequence belongs to the DNA mismatch repair MutS family. MSH3 subfamily. As to quaternary structure, heterodimer consisting of msh-2-msh-3 (MutS beta). Forms a ternary complex with MutL alpha (mlh-1-pms-1).

It is found in the nucleus. In terms of biological role, component of the post-replicative DNA mismatch repair system (MMR). Heterodimerizes with msh-2 to form MutS beta, which binds to DNA mismatches thereby initiating DNA repair. Msh-3 provides substrate-binding and substrate specificity to the complex. When bound, the MutS beta heterodimer bends the DNA helix and shields approximately 20 base pairs. Acts mainly to repair insertion-deletion loops (IDLs) from 2 to 13 nucleotides in size, but can also repair base-base and single insertion-deletion mismatches that occur during replication. After mismatch binding, forms a ternary complex with the MutL alpha heterodimer, which is thought to be responsible for directing the downstream MMR events, including strand discrimination, excision, and resynthesis. ATP binding and hydrolysis play a pivotal role in mismatch repair functions. The sequence is that of DNA mismatch repair protein msh-3 (msh-3) from Neurospora crassa (strain ATCC 24698 / 74-OR23-1A / CBS 708.71 / DSM 1257 / FGSC 987).